The primary structure comprises 302 residues: Actin maturation protease (302 aa).

The segment at 1-26 (MPHTNEDPTAQQAGVILDPPPPLPPP) is disordered. Positions 85-205 (SLIQEGPQCG…WAVISGVLFG (121 aa)) are peptidase C39-like. Cys93 is an active-site residue.

It belongs to the ACTMAP family.

It localises to the cytoplasm. It carries out the reaction N-terminal N(alpha)-acetyl-L-methionyl-L-aspartyl-[protein] + H2O = N-terminal L-aspartyl-[protein] + N-acetyl-L-methionine. The enzyme catalyses N-terminal N(alpha)-acetyl-L-methionyl-L-glutamyl-[protein] + H2O = N-terminal L-glutamyl-[protein] + N-acetyl-L-methionine. The catalysed reaction is N-terminal N(alpha)-acetyl-L-cysteinyl-L-aspartyl-[protein] + H2O = N-terminal L-aspartyl-[protein] + N-acetyl-L-cysteine. It catalyses the reaction N-terminal N(alpha)-acetyl-L-cysteinyl-L-glutamyl-[protein] + H2O = N-terminal L-glutamyl-[protein] + N-acetyl-L-cysteine. Its function is as follows. Actin maturation protease that specifically mediates the cleavage of immature acetylated N-terminal actin, thereby contributing to actin maturation. Cleaves N-terminal acetylated methionine of immature cytoplasmic beta- and gamma-actin after translation. Cleaves N-terminal acetylated cysteine of muscle alpha-actin after canonical removal of N-terminal methionine. The chain is Actin maturation protease from Xenopus tropicalis (Western clawed frog).